Here is an 87-residue protein sequence, read N- to C-terminus: MANIKSKQKRILTNEKSRQRNKSVRSAVRTEIRKFREAVAAGDKAAAEKQLRVASRALDKSVSKGVFHRNTAANKKSGMATAFNKMA.

Basic residues predominate over residues 1-10 (MANIKSKQKR). Positions 1–27 (MANIKSKQKRILTNEKSRQRNKSVRSA) are disordered.

This sequence belongs to the bacterial ribosomal protein bS20 family.

In terms of biological role, binds directly to 16S ribosomal RNA. The protein is Small ribosomal subunit protein bS20 of Corynebacterium aurimucosum (strain ATCC 700975 / DSM 44827 / CIP 107346 / CN-1) (Corynebacterium nigricans).